A 328-amino-acid chain; its full sequence is Complex I intermediate-associated protein 30, mitochondrial (328 aa).

A mitochondrion-targeting transit peptide spans 1-24 (MSSIHKLLTGIYIHKNFLRPRAAL). Polar residues predominate over residues 44-54 (VTSVDRASQQG). The interval 44-80 (VTSVDRASQQGKTEEGLQGHDHKEVALDAPSPDRTPE) is disordered. The span at 55-69 (KTEEGLQGHDHKEVA) shows a compositional bias: basic and acidic residues. Serine 319 is subject to Phosphoserine.

This sequence belongs to the CIA30 family. Part of the mitochondrial complex I assembly/MCIA complex that comprises at least the core subunits TMEM126B, NDUFAF1, ECSIT and ACAD9 and complement subunits such as COA1 and TMEM186. Interacts with ECSIT. Interacts with ACAD9. At early stages of complex I assembly, it is found in intermediate subcomplexes that contain different subunits including NDUFB6, NDUFA6, NDUFA9, NDUFS3, NDUFS7, ND1, ND2 and ND3. Interacts with TMEM70 and TMEM242.

The protein resides in the mitochondrion. It localises to the mitochondrion matrix. As part of the MCIA complex, involved in the assembly of the mitochondrial complex I. This Mus musculus (Mouse) protein is Complex I intermediate-associated protein 30, mitochondrial.